The following is a 273-amino-acid chain: Ribosomal RNA small subunit methyltransferase A (273 aa).

Residues N18, L20, G45, E66, D91, and N113 each coordinate S-adenosyl-L-methionine.

Belongs to the class I-like SAM-binding methyltransferase superfamily. rRNA adenine N(6)-methyltransferase family. RsmA subfamily.

Its subcellular location is the cytoplasm. It carries out the reaction adenosine(1518)/adenosine(1519) in 16S rRNA + 4 S-adenosyl-L-methionine = N(6)-dimethyladenosine(1518)/N(6)-dimethyladenosine(1519) in 16S rRNA + 4 S-adenosyl-L-homocysteine + 4 H(+). Its function is as follows. Specifically dimethylates two adjacent adenosines (A1518 and A1519) in the loop of a conserved hairpin near the 3'-end of 16S rRNA in the 30S particle. May play a critical role in biogenesis of 30S subunits. This is Ribosomal RNA small subunit methyltransferase A from Klebsiella pneumoniae subsp. pneumoniae (strain ATCC 700721 / MGH 78578).